Reading from the N-terminus, the 380-residue chain is PqqA peptide cyclase (380 aa).

Positions Phe12 to Arg228 constitute a Radical SAM core domain. Cys26, Cys30, and Cys33 together coordinate [4Fe-4S] cluster.

It belongs to the radical SAM superfamily. PqqE family. Interacts with PqqD. The interaction is necessary for activity of PqqE. Requires [4Fe-4S] cluster as cofactor.

The catalysed reaction is [PQQ precursor protein] + S-adenosyl-L-methionine = E-Y cross-linked-[PQQ precursor protein] + 5'-deoxyadenosine + L-methionine + H(+). It participates in cofactor biosynthesis; pyrroloquinoline quinone biosynthesis. Catalyzes the cross-linking of a glutamate residue and a tyrosine residue in the PqqA protein as part of the biosynthesis of pyrroloquinoline quinone (PQQ). This chain is PqqA peptide cyclase, found in Bradyrhizobium diazoefficiens (strain JCM 10833 / BCRC 13528 / IAM 13628 / NBRC 14792 / USDA 110).